The sequence spans 208 residues: Anthranilate synthase component 2 (208 aa).

Positions 3–208 constitute a Glutamine amidotransferase type-1 domain; sequence HVVLIDNHDS…SRCVEQLLAN (206 aa). L-glutamine is bound at residue 53–55; that stretch reads GPG. The active-site Nucleophile; for GATase activity is Cys80. L-glutamine is bound by residues Gln84 and 145 to 146; that span reads SL. Catalysis depends on for GATase activity residues His185 and Glu187.

As to quaternary structure, heterotetramer consisting of two non-identical subunits: a beta subunit (TrpG) and a large alpha subunit (TrpE).

The enzyme catalyses chorismate + L-glutamine = anthranilate + pyruvate + L-glutamate + H(+). Its pathway is amino-acid biosynthesis; L-tryptophan biosynthesis; L-tryptophan from chorismate: step 1/5. Its function is as follows. Part of a heterotetrameric complex that catalyzes the two-step biosynthesis of anthranilate, an intermediate in the biosynthesis of L-tryptophan. In the first step, the glutamine-binding beta subunit (TrpG) of anthranilate synthase (AS) provides the glutamine amidotransferase activity which generates ammonia as a substrate that, along with chorismate, is used in the second step, catalyzed by the large alpha subunit of AS (TrpE) to produce anthranilate. In the absence of TrpG, TrpE can synthesize anthranilate directly from chorismate and high concentrations of ammonia. The protein is Anthranilate synthase component 2 (trpG) of Corynebacterium glutamicum (strain ATCC 13032 / DSM 20300 / JCM 1318 / BCRC 11384 / CCUG 27702 / LMG 3730 / NBRC 12168 / NCIMB 10025 / NRRL B-2784 / 534).